Consider the following 43-residue polypeptide: Protein PsbN (43 aa).

The helical transmembrane segment at 7-27 threads the bilayer; it reads VTIFISGLLVSFTGYALYIAF.

This sequence belongs to the PsbN family.

Its subcellular location is the plastid. It localises to the chloroplast thylakoid membrane. Its function is as follows. May play a role in photosystem I and II biogenesis. The sequence is that of Protein PsbN from Dioscorea bulbifera (Air potato).